We begin with the raw amino-acid sequence, 681 residues long: T-box-containing protein 2 (681 aa).

Residues 149–323 constitute a DNA-binding region (T-box); it reads LWDQFSRAGT…NNPFAKGFRE (175 aa). 4 disordered regions span residues 316–351, 456–489, 521–558, and 589–611; these read PFAK…EQRR, GITS…NQSN, PNIN…LIPG, and ESGE…CQSG. The span at 470-489 shows a compositional bias: low complexity; it reads NSFTYYNSSSPSSSDSNQSN. Over residues 521 to 534 the composition is skewed to polar residues; it reads PNINIPNTVETNVH.

In terms of assembly, monomer. In terms of tissue distribution, differentiating muscle and tailbud tip.

Its subcellular location is the nucleus. Its function is as follows. Involved in the transcriptional regulation of genes required for muscle differentiation. Binds to a palindromic site (called T site) and activates gene transcription when bound to such a site. The polypeptide is T-box-containing protein 2 (T2) (Halocynthia roretzi (Sea squirt)).